Here is a 652-residue protein sequence, read N- to C-terminus: DNA ligase (652 aa).

NAD(+) contacts are provided by residues D29 to D33, S78 to L79, and E107. Residue K109 is the N6-AMP-lysine intermediate of the active site. NAD(+) contacts are provided by R130, E164, K278, and K302. Zn(2+) is bound by residues C395, C398, C413, and C418. Positions N577–L652 constitute a BRCT domain.

The protein belongs to the NAD-dependent DNA ligase family. LigA subfamily. Mg(2+) is required as a cofactor. Mn(2+) serves as cofactor.

It carries out the reaction NAD(+) + (deoxyribonucleotide)n-3'-hydroxyl + 5'-phospho-(deoxyribonucleotide)m = (deoxyribonucleotide)n+m + AMP + beta-nicotinamide D-nucleotide.. Functionally, DNA ligase that catalyzes the formation of phosphodiester linkages between 5'-phosphoryl and 3'-hydroxyl groups in double-stranded DNA using NAD as a coenzyme and as the energy source for the reaction. It is essential for DNA replication and repair of damaged DNA. The chain is DNA ligase from Streptococcus pyogenes serotype M4 (strain MGAS10750).